The following is a 133-amino-acid chain: uncharacterized protein (133 aa).

A helical transmembrane segment spans residues 36-56; that stretch reads LPMLIALACIFLLLATCLLFM. Residues 105-133 form a disordered region; that stretch reads HGRPTVPRQPLPGPEDNRSHCDYMESTKM. Over residues 119–133 the composition is skewed to basic and acidic residues; that stretch reads EDNRSHCDYMESTKM.

Its subcellular location is the membrane. This is an uncharacterized protein from Homo sapiens (Human).